The chain runs to 515 residues: Cytoplasmic dynein 1 light intermediate chain 1 (515 aa).

Over residues 1–24 (MAAVGRAGSFGSSSASGAANNASA) the composition is skewed to low complexity. The interval 1–34 (MAAVGRAGSFGSSSASGAANNASAELRAGGEEDD) is disordered. 64 to 71 (GEDGAGKT) serves as a coordination point for ATP. 2 disordered regions span residues 370–424 (QSQL…DPNM) and 445–515 (KTGS…GEAS). Polar residues predominate over residues 397–409 (RTPNRSVTSNVAS). The segment covering 448–468 (SPGGPGGVGGSPGGGSAGGTG) has biased composition (gly residues). The segment covering 490–499 (ELDRISRKPE) has biased composition (basic and acidic residues). The span at 502–515 (SPTSPTSPTEGEAS) shows a compositional bias: polar residues.

The protein belongs to the dynein light intermediate chain family. As to quaternary structure, homodimer. The cytoplasmic dynein 1 complex consists of two catalytic heavy chains (HCs) and a number of non-catalytic subunits presented by intermediate chains (ICs). In terms of processing, phosphorylated.

The protein resides in the cytoplasm. It localises to the cytoskeleton. It is found in the chromosome. The protein localises to the centromere. Its subcellular location is the kinetochore. The protein resides in the spindle pole. It localises to the recycling endosome membrane. Its function is as follows. Acts as one of several non-catalytic accessory components of the cytoplasmic dynein 1 complex that are thought to be involved in linking dynein to cargos and to adapter proteins that regulate dynein function. Cytoplasmic dynein 1 acts as a motor for the intracellular retrograde motility of vesicles and organelles along microtubules. May play a role in binding dynein to membranous organelles or chromosomes. May regulate the movement of peripheral sorting endosomes along microtubule tracks toward the microtubule organizing center/centrosome, generating the endosomal recycling compartment. This Gallus gallus (Chicken) protein is Cytoplasmic dynein 1 light intermediate chain 1 (DYNC1LI1).